Reading from the N-terminus, the 184-residue chain is Photosystem I assembly protein Ycf4 (184 aa).

The next 2 helical transmembrane spans lie at 24 to 44 and 57 to 77; these read WAFILFLGSLGFLLVGTSSYI and IIFFPQGIVMSFYGIAGLFIS.

Belongs to the Ycf4 family.

It is found in the plastid. The protein resides in the chloroplast thylakoid membrane. Its function is as follows. Seems to be required for the assembly of the photosystem I complex. This Buxus microphylla (Littleleaf boxwood) protein is Photosystem I assembly protein Ycf4.